We begin with the raw amino-acid sequence, 397 residues long: Cathepsin E (397 aa).

An N-terminal signal peptide occupies residues 1-16; the sequence is MKQFLVVLLILSFVHG. Residues 17 to 49 constitute a propeptide, activation peptide; sequence IIRVPLKRQKSMRKILKEKGKLSHLWTKQGNEF. Positions 74 to 385 constitute a Peptidase A1 domain; the sequence is YFGQISIGTP…DRGNNRVGFA (312 aa). Aspartate 92 is an active-site residue. Cysteines 105 and 110 form a disulfide. An N-linked (GlcNAc...) asparagine glycan is attached at asparagine 139. Cysteine 268 and cysteine 272 are joined by a disulfide. Residue aspartate 277 is part of the active site. Residues cysteine 310 and cysteine 344 are joined by a disulfide bond.

Belongs to the peptidase A1 family. Homodimer; disulfide-linked. Post-translationally, glycosylated. Contains high mannose-type oligosaccharide. In terms of tissue distribution, found in the larval foregut and adult stomach.

It localises to the endosome. It carries out the reaction Similar to cathepsin D, but slightly broader specificity.. May have a role in immune function. Probably involved in the processing of antigenic peptides during MHC class II-mediated antigen presentation. The sequence is that of Cathepsin E (CTSE) from Aquarana catesbeiana (American bullfrog).